A 308-amino-acid polypeptide reads, in one-letter code: Tetraspanin-12 (308 aa).

The Cytoplasmic portion of the chain corresponds to 1 to 41 (MANRRQPVQHRAQQRVYRQSQIRYAPGAGGESEISCCVKYS). A helical transmembrane segment spans residues 42 to 62 (VFSFNVIFFLLGFGLLLFGVW). At 63–86 (AQIEKNTFVNMLSKASKLYLDPTW) the chain is on the extracellular side. A helical membrane pass occupies residues 87 to 107 (PLLIVGFLTFIIGFSGCVGSL). Residues 108 to 112 (RENTS) are Cytoplasmic-facing. The helical transmembrane segment at 113–133 (FLTFYSTLLGLLLIAEFSAGV) threads the bilayer. Topologically, residues 134–268 (FAYACRDQLD…PKLQLWLNNN (135 aa)) are extracellular. N-linked (GlcNAc...) asparagine glycosylation is present at asparagine 213. A helical transmembrane segment spans residues 269 to 289 (MLLVAVSMVIIAIIQVLGICF). The Cytoplasmic portion of the chain corresponds to 290-308 (AQNLKSDILAQRAKWYYTH).

This sequence belongs to the tetraspanin (TM4SF) family. May interact with protease sup-17; the interaction promotes sup-17 cell membrane localization. As to expression, expressed in the germline.

Its subcellular location is the cell membrane. The protein resides in the cytoplasmic vesicle membrane. It localises to the endosome membrane. The protein localises to the early endosome membrane. It is found in the late endosome membrane. Its subcellular location is the recycling endosome membrane. The protein resides in the golgi apparatus. It localises to the trans-Golgi network membrane. In terms of biological role, functions redundantly with tsp-14 isoform a to regulate body size, embryonic and vulva development. Functions redundantly with tsp-14 (isoforms a and b) to regulate cell fate specification in the postembryonic mesodermal M lineage and male development. May regulate BMP-like Sma/Mab signaling by mediating protease sup-17 trafficking to the cell surface. Together with tsp-14, functions redundantly to maintain cell surface levels of the BMP type II receptor daf-4 (but not BMP type I receptor sma-6), probably by regulating endosomal sorting of receptors and their targeting to degradative lysosomes. Together with tsp-14 involved in maintaining the structural and functional integrity of the endosomal network. Together with tsp-14, probably acts by modulating the activation of glp-1, a Notch-like receptor, to regulate germline maturation. Probably acts by modulating the activation of lin-12, a Notch-like receptor, to regulate cell fate specification such as the anchor cell/ventral uterine precursor cell decision. The chain is Tetraspanin-12 from Caenorhabditis elegans.